We begin with the raw amino-acid sequence, 103 residues long: Histone H4 (103 aa).

Residues 1-14 (MSGRGKGGKGLGKG) are compositionally biased toward gly residues. Residues 1–20 (MSGRGKGGKGLGKGGAKRHR) form a disordered region. N-acetylserine is present on serine 2. N6-acetyl-N6-methyllysine; alternate is present on residues lysine 6 and lysine 13. An N6-acetyllysine modification is found at lysine 17. A DNA-binding region spans residues 17 to 21 (KRHRK). At lysine 21 the chain carries N6-methyllysine.

It belongs to the histone H4 family. In terms of assembly, the nucleosome is a histone octamer containing two molecules each of H2A, H2B, H3 and H4 assembled in one H3-H4 heterotetramer and two H2A-H2B heterodimers. The octamer wraps approximately 147 bp of DNA.

Its subcellular location is the nucleus. It localises to the chromosome. Functionally, core component of nucleosome. Nucleosomes wrap and compact DNA into chromatin, limiting DNA accessibility to the cellular machineries which require DNA as a template. Histones thereby play a central role in transcription regulation, DNA repair, DNA replication and chromosomal stability. DNA accessibility is regulated via a complex set of post-translational modifications of histones, also called histone code, and nucleosome remodeling. This Ascaris suum (Pig roundworm) protein is Histone H4.